The following is an 86-amino-acid chain: Small ribosomal subunit protein bS16 (86 aa).

This sequence belongs to the bacterial ribosomal protein bS16 family.

This is Small ribosomal subunit protein bS16 from Acidithiobacillus ferrooxidans (strain ATCC 23270 / DSM 14882 / CIP 104768 / NCIMB 8455) (Ferrobacillus ferrooxidans (strain ATCC 23270)).